A 274-amino-acid chain; its full sequence is MRMALGVSYNGQAYNGWQSQPSGNTVQDRLEAALGRFATQEVHTICAGRTDAGVHGLMQVVHFDTQLQRAPFSWVRGTNTFLPTDIAVQWAQPVPDAFHSRACAVARRYAYVLLQSPVRPSVDAGRVGWVFHALDEQAMHRAVQHLLGEHDFTSFRASACQAKSPVKTLHRIDITRRAPPAGESTGTHGCIPCYWRFEFEGNAFLHHMIRNIMGCIVAIGQGLYPPEWMRTVLEARSRDAAAPTFSPDGLYFQGPVYGAEWGLPTRTAAYDWLP.

Residue aspartate 51 is the Nucleophile of the active site. Residue tyrosine 109 coordinates substrate.

It belongs to the tRNA pseudouridine synthase TruA family. As to quaternary structure, homodimer.

It carries out the reaction uridine(38/39/40) in tRNA = pseudouridine(38/39/40) in tRNA. Its function is as follows. Formation of pseudouridine at positions 38, 39 and 40 in the anticodon stem and loop of transfer RNAs. This is tRNA pseudouridine synthase A from Acidovorax ebreus (strain TPSY) (Diaphorobacter sp. (strain TPSY)).